A 376-amino-acid polypeptide reads, in one-letter code: Copper-containing nitrite reductase (376 aa).

The segment at residues 1–33 (MSEQFQMTRRSMLAGAAIAGAVTPLIGAVSAHA) is a signal peptide (tat-type signal). Plastocyanin-like domains lie at 98-193 (MTFN…IMVL) and 258-359 (GAVG…FAVT). Residues H131, H136, H171, C172, H181, M186, and H342 each contribute to the Cu cation site.

Belongs to the multicopper oxidase family. Homotrimer. It depends on Cu(2+) as a cofactor. Cu(+) is required as a cofactor. FAD serves as cofactor. Predicted to be exported by the Tat system. The position of the signal peptide cleavage has not been experimentally proven.

It localises to the periplasm. It carries out the reaction nitric oxide + Fe(III)-[cytochrome c] + H2O = Fe(II)-[cytochrome c] + nitrite + 2 H(+). It participates in nitrogen metabolism; nitrate reduction (denitrification); dinitrogen from nitrate: step 2/4. In Rhizobium meliloti (strain 1021) (Ensifer meliloti), this protein is Copper-containing nitrite reductase (nirK).